An 80-amino-acid polypeptide reads, in one-letter code: Bacteriochlorophyll c-binding protein (80 aa).

H25 contacts a bacteriochlorophyll c. Residues 49–80 form a disordered region; sequence PGVSRSGSGEGAFSSSPSNGFRPKRIRSRFNR. A propeptide spanning residues 54-80 is cleaved from the precursor; the sequence is SGSGEGAFSSSPSNGFRPKRIRSRFNR. Residues 70–80 show a composition bias toward basic residues; the sequence is RPKRIRSRFNR.

This sequence belongs to the BChl C/E-binding protein family.

The protein resides in the chlorosome. It localises to the chlorosome envelope. In terms of biological role, component of the photosynthetic apparatus. The light harvesting B740 complex binds bacteriochlorophyll c. In Chloroflexus aurantiacus (strain ATCC 29366 / DSM 635 / J-10-fl), this protein is Bacteriochlorophyll c-binding protein (cmsA).